A 223-amino-acid polypeptide reads, in one-letter code: Putative NAD(P)H nitroreductase SAUSA300_2462 (223 aa).

Belongs to the nitroreductase family. FMN serves as cofactor.

This Staphylococcus aureus (strain USA300) protein is Putative NAD(P)H nitroreductase SAUSA300_2462.